Here is a 799-residue protein sequence, read N- to C-terminus: Valine--tRNA ligase (799 aa).

Residue Lys-536 participates in ATP binding.

It belongs to the class-I aminoacyl-tRNA synthetase family. ValS type 2 subfamily.

It localises to the cytoplasm. It carries out the reaction tRNA(Val) + L-valine + ATP = L-valyl-tRNA(Val) + AMP + diphosphate. Functionally, catalyzes the attachment of valine to tRNA(Val). As ValRS can inadvertently accommodate and process structurally similar amino acids such as threonine, to avoid such errors, it has a 'posttransfer' editing activity that hydrolyzes mischarged Thr-tRNA(Val) in a tRNA-dependent manner. This Pyrobaculum aerophilum (strain ATCC 51768 / DSM 7523 / JCM 9630 / CIP 104966 / NBRC 100827 / IM2) protein is Valine--tRNA ligase (valS).